We begin with the raw amino-acid sequence, 305 residues long: Aspartate carbamoyltransferase catalytic subunit (305 aa).

Carbamoyl phosphate-binding residues include Arg-54 and Thr-55. Position 83 (Lys-83) interacts with L-aspartate. Carbamoyl phosphate is bound by residues Arg-104, His-132, and Gln-135. L-aspartate contacts are provided by Arg-165 and Arg-226. Carbamoyl phosphate is bound by residues Leu-265 and Pro-266.

It belongs to the aspartate/ornithine carbamoyltransferase superfamily. ATCase family. In terms of assembly, heterooligomer of catalytic and regulatory chains.

The catalysed reaction is carbamoyl phosphate + L-aspartate = N-carbamoyl-L-aspartate + phosphate + H(+). It functions in the pathway pyrimidine metabolism; UMP biosynthesis via de novo pathway; (S)-dihydroorotate from bicarbonate: step 2/3. Functionally, catalyzes the condensation of carbamoyl phosphate and aspartate to form carbamoyl aspartate and inorganic phosphate, the committed step in the de novo pyrimidine nucleotide biosynthesis pathway. The chain is Aspartate carbamoyltransferase catalytic subunit from Pyrobaculum arsenaticum (strain DSM 13514 / JCM 11321 / PZ6).